The sequence spans 77 residues: Translational regulator CsrA (77 aa).

The protein belongs to the CsrA/RsmA family. In terms of assembly, homodimer; the beta-strands of each monomer intercalate to form a hydrophobic core, while the alpha-helices form wings that extend away from the core.

Its subcellular location is the cytoplasm. Functionally, a translational regulator that binds mRNA to regulate translation initiation and/or mRNA stability. Usually binds in the 5'-UTR at or near the Shine-Dalgarno sequence preventing ribosome-binding, thus repressing translation. Its main target seems to be the major flagellin gene, while its function is anatagonized by FliW. This chain is Translational regulator CsrA, found in Pseudarthrobacter chlorophenolicus (strain ATCC 700700 / DSM 12829 / CIP 107037 / JCM 12360 / KCTC 9906 / NCIMB 13794 / A6) (Arthrobacter chlorophenolicus).